Reading from the N-terminus, the 132-residue chain is Small ribosomal subunit protein uS8 (132 aa).

It belongs to the universal ribosomal protein uS8 family. In terms of assembly, part of the 30S ribosomal subunit. Contacts proteins S5 and S12.

One of the primary rRNA binding proteins, it binds directly to 16S rRNA central domain where it helps coordinate assembly of the platform of the 30S subunit. This is Small ribosomal subunit protein uS8 from Rhodococcus erythropolis (strain PR4 / NBRC 100887).